The chain runs to 286 residues: tRNA (guanine-N(7)-)-methyltransferase (286 aa).

S-adenosyl-L-methionine is bound by residues Gly-91, 114-115, 158-159, and Leu-178; these read EI and NS. Asp-181 is a catalytic residue. Position 256–258 (256–258) interacts with S-adenosyl-L-methionine; the sequence is TEE.

This sequence belongs to the class I-like SAM-binding methyltransferase superfamily. TrmB family. In terms of assembly, forms a complex with TRM82.

The protein localises to the nucleus. It carries out the reaction guanosine(46) in tRNA + S-adenosyl-L-methionine = N(7)-methylguanosine(46) in tRNA + S-adenosyl-L-homocysteine. Its pathway is tRNA modification; N(7)-methylguanine-tRNA biosynthesis. Catalyzes the formation of N(7)-methylguanine at position 46 (m7G46) in tRNA. The sequence is that of tRNA (guanine-N(7)-)-methyltransferase from Cryptococcus neoformans var. neoformans serotype D (strain B-3501A) (Filobasidiella neoformans).